The chain runs to 665 residues: DNA mismatch repair protein MutL (665 aa).

Belongs to the DNA mismatch repair MutL/HexB family.

Its function is as follows. This protein is involved in the repair of mismatches in DNA. It is required for dam-dependent methyl-directed DNA mismatch repair. May act as a 'molecular matchmaker', a protein that promotes the formation of a stable complex between two or more DNA-binding proteins in an ATP-dependent manner without itself being part of a final effector complex. This is DNA mismatch repair protein MutL from Acidobacterium capsulatum (strain ATCC 51196 / DSM 11244 / BCRC 80197 / JCM 7670 / NBRC 15755 / NCIMB 13165 / 161).